The primary structure comprises 82 residues: Putative membrane protein insertion efficiency factor (82 aa).

The tract at residues 63–82 is disordered; that stretch reads PGGHDPVPESTILSKEKSVK.

This sequence belongs to the UPF0161 family.

Its subcellular location is the cell inner membrane. Functionally, could be involved in insertion of integral membrane proteins into the membrane. In Protochlamydia amoebophila (strain UWE25), this protein is Putative membrane protein insertion efficiency factor.